Here is a 794-residue protein sequence, read N- to C-terminus: Phosphoribosylformylglycinamidine synthase subunit PurL (794 aa).

Residue histidine 47 is part of the active site. ATP contacts are provided by tyrosine 50 and lysine 89. Glutamate 91 is a Mg(2+) binding site. Residues 92–95 (SHNH) and arginine 114 each bind substrate. Catalysis depends on histidine 93, which acts as the Proton acceptor. Mg(2+) is bound at residue aspartate 115. A substrate-binding site is contributed by glutamine 238. Aspartate 266 contacts Mg(2+). 310 to 312 (ESQ) contacts substrate. 2 residues coordinate ATP: aspartate 522 and glycine 559. A Mg(2+)-binding site is contributed by asparagine 560. Serine 562 contributes to the substrate binding site.

The protein belongs to the FGAMS family. As to quaternary structure, monomer. Part of the FGAM synthase complex composed of 1 PurL, 1 PurQ and 2 PurS subunits.

It localises to the cytoplasm. It catalyses the reaction N(2)-formyl-N(1)-(5-phospho-beta-D-ribosyl)glycinamide + L-glutamine + ATP + H2O = 2-formamido-N(1)-(5-O-phospho-beta-D-ribosyl)acetamidine + L-glutamate + ADP + phosphate + H(+). The protein operates within purine metabolism; IMP biosynthesis via de novo pathway; 5-amino-1-(5-phospho-D-ribosyl)imidazole from N(2)-formyl-N(1)-(5-phospho-D-ribosyl)glycinamide: step 1/2. Functionally, part of the phosphoribosylformylglycinamidine synthase complex involved in the purines biosynthetic pathway. Catalyzes the ATP-dependent conversion of formylglycinamide ribonucleotide (FGAR) and glutamine to yield formylglycinamidine ribonucleotide (FGAM) and glutamate. The FGAM synthase complex is composed of three subunits. PurQ produces an ammonia molecule by converting glutamine to glutamate. PurL transfers the ammonia molecule to FGAR to form FGAM in an ATP-dependent manner. PurS interacts with PurQ and PurL and is thought to assist in the transfer of the ammonia molecule from PurQ to PurL. The protein is Phosphoribosylformylglycinamidine synthase subunit PurL of Prochlorococcus marinus (strain MIT 9303).